Reading from the N-terminus, the 90-residue chain is DNA-binding protein HU (90 aa).

Belongs to the bacterial histone-like protein family. In terms of assembly, homodimer.

In terms of biological role, histone-like DNA-binding protein which is capable of wrapping DNA to stabilize it, and thus to prevent its denaturation under extreme environmental conditions. The chain is DNA-binding protein HU (hup) from Staphylococcus aureus (strain COL).